The chain runs to 367 residues: uncharacterized protein (367 aa).

This is an uncharacterized protein from Arabidopsis thaliana (Mouse-ear cress).